Reading from the N-terminus, the 466-residue chain is 3-isopropylmalate dehydratase large subunit (466 aa).

[4Fe-4S] cluster is bound by residues Cys-347, Cys-407, and Cys-410.

Belongs to the aconitase/IPM isomerase family. LeuC type 1 subfamily. In terms of assembly, heterodimer of LeuC and LeuD. Requires [4Fe-4S] cluster as cofactor.

The catalysed reaction is (2R,3S)-3-isopropylmalate = (2S)-2-isopropylmalate. It functions in the pathway amino-acid biosynthesis; L-leucine biosynthesis; L-leucine from 3-methyl-2-oxobutanoate: step 2/4. In terms of biological role, catalyzes the isomerization between 2-isopropylmalate and 3-isopropylmalate, via the formation of 2-isopropylmaleate. This Escherichia coli O9:H4 (strain HS) protein is 3-isopropylmalate dehydratase large subunit.